The following is a 141-amino-acid chain: Protein GAT3 (141 aa).

A GATA-type zinc finger spans residues 72–98 (CPQCAVIKTSPQWREGPDGEVTLCNAC).

This Saccharomyces cerevisiae (strain ATCC 204508 / S288c) (Baker's yeast) protein is Protein GAT3 (GAT3).